A 253-amino-acid chain; its full sequence is 2,3-bisphosphoglycerate-dependent phosphoglycerate mutase (253 aa).

Substrate contacts are provided by residues 12–19, 25–26, Arg-64, 91–94, Lys-102, 118–119, and 187–188; these read RHGESEWN, TG, ERHY, RR, and GN. Residue His-13 is the Tele-phosphohistidine intermediate of the active site. Glu-91 serves as the catalytic Proton donor/acceptor.

This sequence belongs to the phosphoglycerate mutase family. BPG-dependent PGAM subfamily.

It catalyses the reaction (2R)-2-phosphoglycerate = (2R)-3-phosphoglycerate. It participates in carbohydrate degradation; glycolysis; pyruvate from D-glyceraldehyde 3-phosphate: step 3/5. Catalyzes the interconversion of 2-phosphoglycerate and 3-phosphoglycerate. The chain is 2,3-bisphosphoglycerate-dependent phosphoglycerate mutase from Streptomyces griseus subsp. griseus (strain JCM 4626 / CBS 651.72 / NBRC 13350 / KCC S-0626 / ISP 5235).